The primary structure comprises 237 residues: Small ribosomal subunit protein uS2 (237 aa).

Belongs to the universal ribosomal protein uS2 family.

This Clostridioides difficile (strain 630) (Peptoclostridium difficile) protein is Small ribosomal subunit protein uS2.